The sequence spans 65 residues: UPF0434 protein RPB_0294 (65 aa).

The protein belongs to the UPF0434 family.

The protein is UPF0434 protein RPB_0294 of Rhodopseudomonas palustris (strain HaA2).